Here is a 59-residue protein sequence, read N- to C-terminus: Ribosome modulation factor (59 aa).

It belongs to the ribosome modulation factor family.

It localises to the cytoplasm. During stationary phase, converts 70S ribosomes to an inactive dimeric form (100S ribosomes). This chain is Ribosome modulation factor, found in Aeromonas veronii (strain B565).